The following is a 287-amino-acid chain: U-megalopygitoxin(8)-Mc8 (287 aa).

Positions 1 to 17 (MYLQYLVLSLFSTTVYG) are cleaved as a signal peptide.

It belongs to the caterpillar 8 family. In terms of processing, contains 2 disulfide bonds. Expressed by the venom apparatus.

Its subcellular location is the secreted. In terms of biological role, probable toxin. The sequence is that of U-megalopygitoxin(8)-Mc8 from Megalopyge crispata (Black-waved flannel moth).